We begin with the raw amino-acid sequence, 335 residues long: Glycerol-3-phosphate dehydrogenase [NAD(P)+] (335 aa).

NADPH is bound by residues Ser-15, Tyr-16, His-36, and Lys-110. Sn-glycerol 3-phosphate contacts are provided by Lys-110, Gly-139, and Thr-141. Ala-143 contributes to the NADPH binding site. Residues Lys-195, Asp-248, Ser-258, Arg-259, and Asn-260 each contribute to the sn-glycerol 3-phosphate site. Lys-195 functions as the Proton acceptor in the catalytic mechanism. Arg-259 is an NADPH binding site. Val-283 and Glu-285 together coordinate NADPH.

Belongs to the NAD-dependent glycerol-3-phosphate dehydrogenase family.

It is found in the cytoplasm. The catalysed reaction is sn-glycerol 3-phosphate + NAD(+) = dihydroxyacetone phosphate + NADH + H(+). It catalyses the reaction sn-glycerol 3-phosphate + NADP(+) = dihydroxyacetone phosphate + NADPH + H(+). It participates in membrane lipid metabolism; glycerophospholipid metabolism. Functionally, catalyzes the reduction of the glycolytic intermediate dihydroxyacetone phosphate (DHAP) to sn-glycerol 3-phosphate (G3P), the key precursor for phospholipid synthesis. The sequence is that of Glycerol-3-phosphate dehydrogenase [NAD(P)+] from Mannheimia succiniciproducens (strain KCTC 0769BP / MBEL55E).